A 263-amino-acid chain; its full sequence is Esterase mokD (263 aa).

Active-site charge relay system residues include serine 134, aspartate 208, and histidine 236.

Belongs to the LovG family.

The enzyme catalyses dihydromonacolin L-[lovastatin nonaketide synthase] + H2O = holo-[lovastatin nonaketide synthase] + dihydromonacolin L carboxylate + H(+). It functions in the pathway polyketide biosynthesis; lovastatin biosynthesis. Functionally, esterase; part of the gene cluster that mediates the biosynthesis of monakolin K, also known as lovastatin, and which acts as a potent competitive inhibitor of HMG-CoA reductase. Monakolin K biosynthesis is performed in two stages. The first stage is catalyzed by the nonaketide synthase mokA, which belongs to type I polyketide synthases and catalyzes the iterative nine-step formation of the polyketide. This PKS stage completed by the action of dehydrogenase mokE, which catalyzes the NADPH-dependent reduction of the unsaturated tetra-, penta- and heptaketide intermediates that arise during the mokA-mediated biosynthesis of the nonaketide chain and leads to dihydromonacolin L. Covalently bound dihydromonacolin L is released from mokA by the mokD esterase. Conversion of dihydromonacolin L into monacolin L and then monacolin J is subsequently performed with the participation of molecular oxygen and P450 monoogygenase mokC. Finally, mokF performs the conversion of monacoline J to monacoline K through the addition of the side-chain diketide moiety (2R)-2-methylbutanoate produced by the diketide synthase mokB. In Monascus pilosus (Red mold), this protein is Esterase mokD.